Here is a 96-residue protein sequence, read N- to C-terminus: Co-chaperonin GroES (96 aa).

This sequence belongs to the GroES chaperonin family. Heptamer of 7 subunits arranged in a ring. Interacts with the chaperonin GroEL.

The protein resides in the cytoplasm. Its function is as follows. Together with the chaperonin GroEL, plays an essential role in assisting protein folding. The GroEL-GroES system forms a nano-cage that allows encapsulation of the non-native substrate proteins and provides a physical environment optimized to promote and accelerate protein folding. GroES binds to the apical surface of the GroEL ring, thereby capping the opening of the GroEL channel. This chain is Co-chaperonin GroES, found in Buchnera aphidicola subsp. Myzus persicae (Myzus persicae primary endosymbiont).